The sequence spans 389 residues: Putative DNA processing protein DprA (389 aa).

The protein belongs to the DprA/Smf family.

May help load RecA onto ssDNA. The sequence is that of Putative DNA processing protein DprA from Mycobacterium tuberculosis (strain CDC 1551 / Oshkosh).